The primary structure comprises 248 residues: MKILVSNDDGVNAQGLHCLSEALCSLGEVIVVAPDRNRSGASNSLTLENPIRVETLETGKRYSVKGTPTDCVHFAVNKLLDPWPDIVVSGINHGANLGDDVIYSGTVAAATEGRHMGLPAVAVSLVGETHFASAAHYACLLVSRLRTHPLPSDQILNVNVPDLPLEQIKGIKVTRLGNRHRGEKMIVMQDPRGKPVYWIGPPGEKQDAGEGTDFHAIEQGYVSITPLQVDMTAYGSVSELTTWVGEFK.

A divalent metal cation-binding residues include Asp8, Asp9, Ser39, and Asn92.

It belongs to the SurE nucleotidase family. Requires a divalent metal cation as cofactor.

The protein localises to the cytoplasm. The catalysed reaction is a ribonucleoside 5'-phosphate + H2O = a ribonucleoside + phosphate. Nucleotidase that shows phosphatase activity on nucleoside 5'-monophosphates. This is 5'-nucleotidase SurE from Tolumonas auensis (strain DSM 9187 / NBRC 110442 / TA 4).